The following is a 384-amino-acid chain: Probable beta-1,3-galactosyltransferase 1 (384 aa).

Residues Ser21–Ile43 form a helical; Signal-anchor for type II membrane protein membrane-spanning segment. N-linked (GlcNAc...) asparagine glycosylation is found at Asn73 and Asn105.

The protein belongs to the glycosyltransferase 31 family. Mn(2+) serves as cofactor.

It localises to the golgi apparatus membrane. The protein operates within protein modification; protein glycosylation. Its function is as follows. Beta-1,3-galactosyltransferase that transfers galactose from UDP-galactose to substrates with a terminal glycosyl residue. This is Probable beta-1,3-galactosyltransferase 1 (B3GALT1) from Arabidopsis thaliana (Mouse-ear cress).